Consider the following 209-residue polypeptide: ATP-dependent Clp protease proteolytic subunit (209 aa).

The active-site Nucleophile is Ser107. The active site involves His132.

It belongs to the peptidase S14 family. In terms of assembly, fourteen ClpP subunits assemble into 2 heptameric rings which stack back to back to give a disk-like structure with a central cavity, resembling the structure of eukaryotic proteasomes.

Its subcellular location is the cytoplasm. It catalyses the reaction Hydrolysis of proteins to small peptides in the presence of ATP and magnesium. alpha-casein is the usual test substrate. In the absence of ATP, only oligopeptides shorter than five residues are hydrolyzed (such as succinyl-Leu-Tyr-|-NHMec, and Leu-Tyr-Leu-|-Tyr-Trp, in which cleavage of the -Tyr-|-Leu- and -Tyr-|-Trp bonds also occurs).. Functionally, cleaves peptides in various proteins in a process that requires ATP hydrolysis. Has a chymotrypsin-like activity. Plays a major role in the degradation of misfolded proteins. The chain is ATP-dependent Clp protease proteolytic subunit from Methylobacterium nodulans (strain LMG 21967 / CNCM I-2342 / ORS 2060).